Reading from the N-terminus, the 88-residue chain is UPF0297 protein SPCG_0205 (88 aa).

This sequence belongs to the UPF0297 family.

The polypeptide is UPF0297 protein SPCG_0205 (Streptococcus pneumoniae (strain CGSP14)).